A 278-amino-acid chain; its full sequence is Secoisolariciresinol dehydrogenase (278 aa).

Residues 23–28, Asp47, Val73, and Asn99 each bind NAD(+); that span reads GGAGGI. Substrate contacts are provided by Ser104 and Ser164. Tyr167 functions as the Proton donor/acceptor in the catalytic mechanism. Residues Lys171 and Val200 each contribute to the NAD(+) site.

It belongs to the short-chain dehydrogenases/reductases (SDR) family. Homotetramer.

The catalysed reaction is (-)-secoisolariciresinol + 2 NAD(+) = (-)-matairesinol + 2 NADH + 2 H(+). Oxidoreductase involved in lignan biosynthesis. Catalyzes the stereospecific conversion of (-)-secoisolariciresinol to (-)-matairesinol via a lactol intermediate. This is Secoisolariciresinol dehydrogenase from Podophyllum peltatum (American mandrake).